Here is a 256-residue protein sequence, read N- to C-terminus: Bialaphos biosynthetic pathway regulatory protein (256 aa).

The 66-residue stretch at 184 to 249 (ETADAIDVSD…QLGARAAECR (66 aa)) folds into the HTH luxR-type domain. Residues 208-227 (DVAMARSLGISTRTLRRVIT) constitute a DNA-binding region (H-T-H motif).

Involved in the regulation of the biosynthesis of phosphinothricin tripeptide (PTT), also known as bialaphos (BA), a natural-product antibiotic and potent herbicide. The sequence is that of Bialaphos biosynthetic pathway regulatory protein (brpA) from Streptomyces hygroscopicus.